The primary structure comprises 676 residues: Heat shock cognate HSP70 protein (676 aa).

The segment at 613–676 is disordered; sequence SARREGKDGW…RIEAINANTE (64 aa). Acidic residues predominate over residues 630–646; that stretch reads GSGDDNDGDDNSDEEDE.

This sequence belongs to the heat shock protein 70 family.

In Trypanosoma brucei brucei, this protein is Heat shock cognate HSP70 protein.